Reading from the N-terminus, the 89-residue chain is Small ribosomal subunit protein uS15 (89 aa).

The protein belongs to the universal ribosomal protein uS15 family. In terms of assembly, part of the 30S ribosomal subunit. Forms a bridge to the 50S subunit in the 70S ribosome, contacting the 23S rRNA.

Functionally, one of the primary rRNA binding proteins, it binds directly to 16S rRNA where it helps nucleate assembly of the platform of the 30S subunit by binding and bridging several RNA helices of the 16S rRNA. Forms an intersubunit bridge (bridge B4) with the 23S rRNA of the 50S subunit in the ribosome. The sequence is that of Small ribosomal subunit protein uS15 from Nitratidesulfovibrio vulgaris (strain DSM 19637 / Miyazaki F) (Desulfovibrio vulgaris).